We begin with the raw amino-acid sequence, 1506 residues long: Transcriptional repressor NF-X1 homolog (1506 aa).

Residues 1–12 are compositionally biased toward polar residues; that stretch reads MEESQNIPPKTQ. 3 disordered regions span residues 1–123, 142–164, and 181–282; these read MEES…NNQL, LKSE…QEPT, and KAFV…KKDI. Low complexity-rich tracts occupy residues 13–103 and 110–121; these read TLNN…SNSN and HNNNYNNNNNNN. Over residues 194 to 209 the composition is skewed to low complexity; sequence NNTNNNNNNNNNNNNN. Basic and acidic residues predominate over residues 217–232; it reads DNNRPQRERRERKPKE. A compositionally biased stretch (pro residues) spans 240-252; that stretch reads PQQPQQPQQPQPQ. A compositionally biased stretch (low complexity) spans 253–263; the sequence is PQQQQQSQQQQ. The span at 267-282 shows a compositional bias: basic and acidic residues; it reads ENNRKKENKLQSKKDI. Residues 363 to 416 form a PHD-type zinc finger; the sequence is IYECMVCFENVGKNAVIWSCSQCFTMFHSSCIKQWSSKSVTTEGKWKCPGCRYN. The segment at 366–414 adopts an RING-type; degenerate zinc-finger fold; that stretch reads CMVCFENVGKNAVIWSCSQCFTMFHSSCIKQWSSKSVTTEGKWKCPGCR. 7 consecutive NF-X1-type zinc fingers follow at residues 460–478, 515–534, 581–600, 642–661, 739–758, 796–817, and 852–868; these read CPHS…NCSS, CGNH…PCEV, CGNH…PCSL, CKQH…SCKV, CGVH…NCYI, CGHS…PCTY, and CLSH…PCLI. Disordered stretches follow at residues 897–1012 and 1021–1040; these read QQSK…VDLN and NEEE…DEDE. The segment covering 903–921 has biased composition (low complexity); that stretch reads TTTTTTTTTTSTTSTTSPK. Residues 925–934 show a composition bias toward acidic residues; it reads KDEELIEDDN. Residues 935–980 show a composition bias toward low complexity; sequence NNNNNNNNNNNNNNNNNNNNNNNNNNNNNNNNNNNNNNNNNNNNNN. Basic and acidic residues-rich tracts occupy residues 981–1002 and 1021–1031; these read EKAE…HSDD and NEEEERIKKEE. Residues 1062 to 1084 form an NF-X1-type 8 zinc finger; sequence CEHTCHQACHPGEPCPTNISCKQ. Disordered regions lie at residues 1132–1167 and 1447–1473; these read SHTL…SSPT and NQNQ…IKPT. Composition is skewed to low complexity over residues 1137–1167 and 1447–1470; these read NNPN…SSPT and NQNQ…NINI.

The protein belongs to the NFX1 family.

The protein resides in the nucleus. Its function is as follows. May play a role in transcription regulation. The polypeptide is Transcriptional repressor NF-X1 homolog (nfx1) (Dictyostelium discoideum (Social amoeba)).